The following is a 63-amino-acid chain: Large ribosomal subunit protein bL28 (63 aa).

Belongs to the bacterial ribosomal protein bL28 family.

This is Large ribosomal subunit protein bL28 from Solibacter usitatus (strain Ellin6076).